The following is a 339-amino-acid chain: Phenylalanine--tRNA ligase alpha subunit (339 aa).

Mg(2+) is bound at residue Glu247.

Belongs to the class-II aminoacyl-tRNA synthetase family. Phe-tRNA synthetase alpha subunit type 1 subfamily. Tetramer of two alpha and two beta subunits. It depends on Mg(2+) as a cofactor.

The protein localises to the cytoplasm. The catalysed reaction is tRNA(Phe) + L-phenylalanine + ATP = L-phenylalanyl-tRNA(Phe) + AMP + diphosphate + H(+). The sequence is that of Phenylalanine--tRNA ligase alpha subunit (pheS) from Deinococcus radiodurans (strain ATCC 13939 / DSM 20539 / JCM 16871 / CCUG 27074 / LMG 4051 / NBRC 15346 / NCIMB 9279 / VKM B-1422 / R1).